A 520-amino-acid polypeptide reads, in one-letter code: Dihydropyrimidinase 2 (520 aa).

Zn(2+) is bound by residues histidine 59, histidine 61, and lysine 152. Residue lysine 152 is modified to N6-carboxylysine. Tyrosine 157 contacts substrate. Histidine 185 and histidine 241 together coordinate Zn(2+). Position 291 (serine 291) interacts with substrate. Aspartate 319 is a Zn(2+) binding site. Asparagine 340 serves as a coordination point for substrate.

The protein belongs to the metallo-dependent hydrolases superfamily. Hydantoinase/dihydropyrimidinase family. In terms of assembly, homotetramer. It depends on Zn(2+) as a cofactor. In terms of processing, carboxylation allows a single lysine to coordinate two zinc ions. Body wall muscles.

It catalyses the reaction 5,6-dihydrouracil + H2O = 3-(carbamoylamino)propanoate + H(+). The protein is Dihydropyrimidinase 2 (dhp-2) of Caenorhabditis elegans.